A 275-amino-acid polypeptide reads, in one-letter code: Diaminopimelate epimerase (275 aa).

Residues asparagine 13, glutamine 46, and asparagine 66 each coordinate substrate. Cysteine 75 functions as the Proton donor in the catalytic mechanism. Substrate-binding positions include 76–77 (GN), asparagine 159, asparagine 192, and 210–211 (ER). The active-site Proton acceptor is the cysteine 219. 220 to 221 (GT) provides a ligand contact to substrate.

The protein belongs to the diaminopimelate epimerase family. In terms of assembly, homodimer.

It localises to the cytoplasm. It catalyses the reaction (2S,6S)-2,6-diaminopimelate = meso-2,6-diaminopimelate. The protein operates within amino-acid biosynthesis; L-lysine biosynthesis via DAP pathway; DL-2,6-diaminopimelate from LL-2,6-diaminopimelate: step 1/1. In terms of biological role, catalyzes the stereoinversion of LL-2,6-diaminopimelate (L,L-DAP) to meso-diaminopimelate (meso-DAP), a precursor of L-lysine and an essential component of the bacterial peptidoglycan. The protein is Diaminopimelate epimerase of Psychromonas ingrahamii (strain DSM 17664 / CCUG 51855 / 37).